A 142-amino-acid polypeptide reads, in one-letter code: MVRVMATGVFDIIHLGHIHYLRESKKLGDELVVVVARDSTARKNGKVPIFDENSRLKLVSELKPVDRAILGHEDDMMKTVVEVMPDIITLGYDQKFDEADLKRKLDQIGVNSRIVRISKYDGNLNSSSMVRKKIMELIGERF.

ATP-binding positions include 9–10 (VF), 14–17 (HLGH), Asp93, and Tyr120.

The protein belongs to the archaeal FAD synthase family. In terms of assembly, homodimer. Requires a divalent metal cation as cofactor.

It catalyses the reaction FMN + ATP + H(+) = FAD + diphosphate. It participates in cofactor biosynthesis; FAD biosynthesis; FAD from FMN: step 1/1. Catalyzes the transfer of the AMP portion of ATP to flavin mononucleotide (FMN) to produce flavin adenine dinucleotide (FAD) coenzyme. This Thermoplasma acidophilum (strain ATCC 25905 / DSM 1728 / JCM 9062 / NBRC 15155 / AMRC-C165) protein is FAD synthase.